Reading from the N-terminus, the 287-residue chain is MNAPISAAPVVTAGSVRFGNQLPLAVIAGPCQLESRGHALEVASALKEIATRLNISLVYKTSFDKANRTSGSAARGLGLAQSLPIFAEIRSSLGLPVLTDVHDASQCAEVAQAVDILQIPAFLCRQTDLLLAAAATGKVVNVKKGQFLAPWDMANVVAKITGAGNPNVLATERGVSFGYNTLISDMRSLPIMAKTTGAPVIFDATHSVQQPGGQGTSSGGQREFVPVLARAAVAVGVAGVFIETHPDPDHAPSDGPNMVPLAQFEGLLRTLMAFDALAKGQAADAIR.

This sequence belongs to the KdsA family.

It localises to the cytoplasm. The enzyme catalyses D-arabinose 5-phosphate + phosphoenolpyruvate + H2O = 3-deoxy-alpha-D-manno-2-octulosonate-8-phosphate + phosphate. The protein operates within carbohydrate biosynthesis; 3-deoxy-D-manno-octulosonate biosynthesis; 3-deoxy-D-manno-octulosonate from D-ribulose 5-phosphate: step 2/3. It functions in the pathway bacterial outer membrane biogenesis; lipopolysaccharide biosynthesis. This Bradyrhizobium sp. (strain ORS 278) protein is 2-dehydro-3-deoxyphosphooctonate aldolase.